The chain runs to 316 residues: Short-chain dehydrogenase/reductase family 16C member 6 (316 aa).

40-64 (LITGAASGLGRLLAIKFASLGAILV) provides a ligand contact to NAD(+). Serine 173 provides a ligand contact to substrate. Tyrosine 186 acts as the Proton acceptor in catalysis.

Belongs to the short-chain dehydrogenases/reductases (SDR) family.

The protein is Short-chain dehydrogenase/reductase family 16C member 6 (SDR16C6) of Bos taurus (Bovine).